Here is a 121-residue protein sequence, read N- to C-terminus: Phosphoribosyl-AMP cyclohydrolase (121 aa).

Asp-76 provides a ligand contact to Mg(2+). Residue Cys-77 participates in Zn(2+) binding. Mg(2+) contacts are provided by Asp-78 and Asp-80. 2 residues coordinate Zn(2+): Cys-93 and Cys-100.

Belongs to the PRA-CH family. As to quaternary structure, homodimer. Requires Mg(2+) as cofactor. The cofactor is Zn(2+).

It is found in the cytoplasm. It carries out the reaction 1-(5-phospho-beta-D-ribosyl)-5'-AMP + H2O = 1-(5-phospho-beta-D-ribosyl)-5-[(5-phospho-beta-D-ribosylamino)methylideneamino]imidazole-4-carboxamide. Its pathway is amino-acid biosynthesis; L-histidine biosynthesis; L-histidine from 5-phospho-alpha-D-ribose 1-diphosphate: step 3/9. In terms of biological role, catalyzes the hydrolysis of the adenine ring of phosphoribosyl-AMP. This Methanococcoides burtonii (strain DSM 6242 / NBRC 107633 / OCM 468 / ACE-M) protein is Phosphoribosyl-AMP cyclohydrolase.